A 400-amino-acid chain; its full sequence is NAD-dependent protein deacetylase sirtuin-7 (400 aa).

A disordered region spans residues 1–28 (MAAGGLSRSERKAAERVRRLREEQQRER). Residues 8 to 28 (RSERKAAERVRRLREEQQRER) show a composition bias toward basic and acidic residues. Residues 82–329 (PEELQRKVRE…QLLMDELGLE (248 aa)) form the Deacetylase sirtuin-type domain. NAD(+)-binding positions include 107 to 126 (GAGISTAASIPDYRGPNGVW) and 167 to 170 (QNCD). The active-site Proton acceptor is His187. Zn(2+) contacts are provided by Cys195, Cys198, Cys225, and Cys228. Residues 268 to 270 (GSS), 297 to 299 (NLQ), and Cys315 contribute to the NAD(+) site. Residues 354 to 380 (SHSRKSLCRSREEPGPGDRGAPLSSAP) form a disordered region. Asymmetric dimethylarginine; alternate is present on Arg388. Arg388 is subject to Omega-N-methylarginine; alternate.

This sequence belongs to the sirtuin family. Class IV subfamily. As to quaternary structure, interacts with UBTF and the RNA polymerase I complex. Interacts with components of the B-WICH complex, such as MYBBP1A, SMARCA5/SNF2H and BAZ1B/WSTF. Interacts with ELK4, leading to stabilization at target promoters for H3K18Ac deacetylation. Interacts with histone H2A and/or histone H2B. Interacts with DNMT1. Interacts with SIRT1. Zn(2+) is required as a cofactor. In terms of processing, phosphorylated during mitosis. Post-translationally, methylation at Arg-388 by PRMT6 inhibits the H3K18Ac histone deacetylase activity, promoting mitochondria biogenesis and maintaining mitochondria respiration. Ubiquitinated via 'Lys-63'-linked ubiquitin chains. Deubiquitinated by USP7, inhibiting the H3K18Ac histone deacetylase activity and regulating gluconeogenesis. Ubiquitinated by E3 ubiquitin-protein ligase complex containing FBXO7; leading to proteasomal degradation.

Its subcellular location is the nucleus. The protein localises to the nucleolus. It is found in the nucleoplasm. It localises to the chromosome. The protein resides in the cytoplasm. It catalyses the reaction N(6)-acetyl-L-lysyl-[protein] + NAD(+) + H2O = 2''-O-acetyl-ADP-D-ribose + nicotinamide + L-lysyl-[protein]. The enzyme catalyses N(6)-glutaryl-L-lysyl-[protein] + NAD(+) + H2O = 2''-O-glutaryl-ADP-D-ribose + nicotinamide + L-lysyl-[protein]. The catalysed reaction is N(6)-succinyl-L-lysyl-[protein] + NAD(+) + H2O = 2''-O-succinyl-ADP-D-ribose + nicotinamide + L-lysyl-[protein]. It carries out the reaction N(6)-propanoyl-L-lysyl-[protein] + NAD(+) + H2O = 3''-O-propanoyl-ADP-D-ribose + nicotinamide + L-lysyl-[protein]. It catalyses the reaction N(6)-decanoyl-L-lysyl-[protein] + NAD(+) + H2O = 2''-O-decanoyl-ADP-D-ribose + nicotinamide + L-lysyl-[protein]. With respect to regulation, NAD-dependent protein-lysine deacetylase and deacylase activities are activated by nucleic acids. Histone deacetylase activity is activated by DNA. Protein-lysine deacylase activity is activated by RNA. H3K18Ac histone deacetylase activity is inhibited by methylation at Arg-388. H3K18Ac histone deacetylase activity is inhibited by deubiquitination by USP7. Functionally, NAD-dependent protein-lysine deacylase that can act both as a deacetylase or deacylase (desuccinylase, depropionylase, deglutarylase and dedecanoylase), depending on the context. Specifically mediates deacetylation of histone H3 at 'Lys-18' (H3K18Ac). In contrast to other histone deacetylases, displays strong preference for a specific histone mark, H3K18Ac, directly linked to control of gene expression. H3K18Ac is mainly present around the transcription start site of genes and has been linked to activation of nuclear hormone receptors; SIRT7 thereby acts as a transcription repressor. Moreover, H3K18 hypoacetylation has been reported as a marker of malignancy in various cancers and seems to maintain the transformed phenotype of cancer cells. Also able to mediate deacetylation of histone H3 at 'Lys-36' (H3K36Ac) in the context of nucleosomes. Also mediates deacetylation of non-histone proteins, such as ATM, CDK9, DDX21, DDB1, FBL, FKBP5/FKBP51, GABPB1, RAN, RRP9/U3-55K and POLR1E/PAF53. Enriched in nucleolus where it stimulates transcription activity of the RNA polymerase I complex. Acts by mediating the deacetylation of the RNA polymerase I subunit POLR1E/PAF53, thereby promoting the association of RNA polymerase I with the rDNA promoter region and coding region. In response to metabolic stress, SIRT7 is released from nucleoli leading to hyperacetylation of POLR1E/PAF53 and decreased RNA polymerase I transcription. Required to restore the transcription of ribosomal RNA (rRNA) at the exit from mitosis. Promotes pre-ribosomal RNA (pre-rRNA) cleavage at the 5'-terminal processing site by mediating deacetylation of RRP9/U3-55K, a core subunit of the U3 snoRNP complex. Mediates 'Lys-37' deacetylation of Ran, thereby regulating the nuclear export of NF-kappa-B subunit RELA/p65. Acts as a regulator of DNA damage repair by mediating deacetylation of ATM during the late stages of DNA damage response, promoting ATM dephosphorylation and deactivation. Suppresses the activity of the DCX (DDB1-CUL4-X-box) E3 ubiquitin-protein ligase complexes by mediating deacetylation of DDB1, which prevents the interaction between DDB1 and CUL4 (CUL4A or CUL4B). Activates RNA polymerase II transcription by mediating deacetylation of CDK9, thereby promoting 'Ser-2' phosphorylation of the C-terminal domain (CTD) of RNA polymerase II. Deacetylates FBL, promoting histone-glutamine methyltransferase activity of FBL. Acts as a regulator of mitochondrial function by catalyzing deacetylation of GABPB1. Regulates Akt/AKT1 activity by mediating deacetylation of FKBP5/FKBP51. Required to prevent R-loop-associated DNA damage and transcription-associated genomic instability by mediating deacetylation and subsequent activation of DDX21, thereby overcoming R-loop-mediated stalling of RNA polymerases. In addition to protein deacetylase activity, also acts as a protein-lysine deacylase. Acts as a protein depropionylase by mediating depropionylation of Osterix (SP7), thereby regulating bone formation by osteoblasts. Acts as a histone deglutarylase by mediating deglutarylation of histone H4 on 'Lys-91' (H4K91glu); a mark that destabilizes nucleosomes by promoting dissociation of the H2A-H2B dimers from nucleosomes. Acts as a histone desuccinylase: in response to DNA damage, recruited to DNA double-strand breaks (DSBs) and catalyzes desuccinylation of histone H3 on 'Lys-122' (H3K122succ), thereby promoting chromatin condensation and DSB repair. Also promotes DSB repair by promoting H3K18Ac deacetylation, regulating non-homologous end joining (NHEJ). Along with its role in DNA repair, required for chromosome synapsis during prophase I of female meiosis by catalyzing H3K18Ac deacetylation. Involved in transcriptional repression of LINE-1 retrotransposon via H3K18Ac deacetylation, and promotes their association with the nuclear lamina. Required to stabilize ribosomal DNA (rDNA) heterochromatin and prevent cellular senescence induced by rDNA instability. Acts as a negative regulator of SIRT1 by preventing autodeacetylation of SIRT1, restricting SIRT1 deacetylase activity. The sequence is that of NAD-dependent protein deacetylase sirtuin-7 (SIRT7) from Bos taurus (Bovine).